The sequence spans 90 residues: Small ribosomal subunit protein bS20 (90 aa).

The protein belongs to the bacterial ribosomal protein bS20 family.

Binds directly to 16S ribosomal RNA. The polypeptide is Small ribosomal subunit protein bS20 (Francisella tularensis subsp. tularensis (strain FSC 198)).